Consider the following 446-residue polypeptide: N-succinylarginine dihydrolase (446 aa).

Residues 19–28 (AGLSFGNVAS), Asn110, and 137–138 (HR) each bind substrate. The active site involves Glu174. Position 213 (Arg213) interacts with substrate. His249 is a catalytic residue. Substrate contacts are provided by Asp251 and Asn364. The Nucleophile role is filled by Cys370.

It belongs to the succinylarginine dihydrolase family. Homodimer.

It catalyses the reaction N(2)-succinyl-L-arginine + 2 H2O + 2 H(+) = N(2)-succinyl-L-ornithine + 2 NH4(+) + CO2. It participates in amino-acid degradation; L-arginine degradation via AST pathway; L-glutamate and succinate from L-arginine: step 2/5. In terms of biological role, catalyzes the hydrolysis of N(2)-succinylarginine into N(2)-succinylornithine, ammonia and CO(2). In Burkholderia multivorans (strain ATCC 17616 / 249), this protein is N-succinylarginine dihydrolase.